The sequence spans 357 residues: UPF0744 protein C106.03 (357 aa).

Ser282 carries the phosphoserine modification.

Belongs to the UPF0744 family.

It is found in the cytoplasm. The chain is UPF0744 protein C106.03 from Schizosaccharomyces pombe (strain 972 / ATCC 24843) (Fission yeast).